An 863-amino-acid chain; its full sequence is Scm-like with four MBT domains protein 1 (863 aa).

4 MBT repeats span residues 20-120 (FSWE…LEAP), 128-232 (SDWN…LQPP), 242-346 (ADWQ…INPP), and 354-451 (FDWA…LSTP). Residues 638-773 (KKKNKRIGRP…SDDENKPPSP (136 aa)) form a disordered region. Over residues 660–679 (KSSKRRKRRKNIFVHKKKRS) the composition is skewed to basic residues. Positions 680–691 (SASVDNTPVGSP) are enriched in polar residues. Composition is skewed to acidic residues over residues 696-710 (GEDEEDADDGDEDSL) and 718-727 (QQEELQEESE). A compositionally biased stretch (low complexity) spans 734 to 744 (SSSSPTQSETP). 2 positions are modified to phosphoserine: Ser-764 and Ser-772. The SAM domain occupies 793–861 (WSVADVVRFI…RIKFAFYEQF (69 aa)).

Interacts with MYOD1. Component of the SLC (SFMBT1-LSD1-CoREST) corepressor complex, which also contains KDM1A/LSD1 and RCOR1/CoREST. Interacts with KDM1A/LSD1 and RCOR1/CoREST. Interacts with MYOD1. Interacts with L3MBTL3. As to expression, highly expressed in the testis, low expression is detected in brain, kidney, heart and lung. Highly expressed in germ cells, where it associates with the synaptic regions of meiotic chromosomes in pachytene stage spermatocytes.

It is found in the nucleus. Functionally, histone-binding protein, which is part of various corepressor complexes. Mediates the recruitment of corepressor complexes to target genes, followed by chromatin compaction and repression of transcription. Plays a role during myogenesis: required for the maintenance of undifferentiated states of myogenic progenitor cells via interaction with MYOD1. Interaction with MYOD1 leads to the recruitment of associated corepressors and silencing of MYOD1 target genes. Part of the SLC complex in germ cells, where it may play a role during spermatogenesis. The sequence is that of Scm-like with four MBT domains protein 1 (Sfmbt1) from Mus musculus (Mouse).